The chain runs to 128 residues: uncharacterized protein (128 aa).

A helical transmembrane segment spans residues 8–28; sequence YQAIYLIFAGFTVFGLLLHFY.

Its subcellular location is the membrane. This is an uncharacterized protein from Haemophilus influenzae (strain ATCC 51907 / DSM 11121 / KW20 / Rd).